The primary structure comprises 221 residues: Leucine rich adaptor protein 1-like (221 aa).

An N-acetylmethionine modification is found at Met-1. The disordered stretch occupies residues Leu-24–Ser-81. The segment covering Leu-28–Ala-39 has biased composition (basic and acidic residues). A compositionally biased stretch (low complexity) spans Ser-48–Pro-75.

The polypeptide is Leucine rich adaptor protein 1-like (Lurap1l) (Mus musculus (Mouse)).